We begin with the raw amino-acid sequence, 542 residues long: Chaperonin GroEL (542 aa).

ATP-binding positions include 29–32, 86–90, G413, 476–478, and D492; these read TLGP, DGTTT, and NAA.

The protein belongs to the chaperonin (HSP60) family. As to quaternary structure, forms a cylinder of 14 subunits composed of two heptameric rings stacked back-to-back. Interacts with the co-chaperonin GroES.

The protein resides in the cytoplasm. The catalysed reaction is ATP + H2O + a folded polypeptide = ADP + phosphate + an unfolded polypeptide.. Together with its co-chaperonin GroES, plays an essential role in assisting protein folding. The GroEL-GroES system forms a nano-cage that allows encapsulation of the non-native substrate proteins and provides a physical environment optimized to promote and accelerate protein folding. This Listeria welshimeri serovar 6b (strain ATCC 35897 / DSM 20650 / CCUG 15529 / CIP 8149 / NCTC 11857 / SLCC 5334 / V8) protein is Chaperonin GroEL.